The chain runs to 156 residues: Small ribosomal subunit protein uS7 (156 aa).

It belongs to the universal ribosomal protein uS7 family. As to quaternary structure, part of the 30S ribosomal subunit. Contacts proteins S9 and S11.

Functionally, one of the primary rRNA binding proteins, it binds directly to 16S rRNA where it nucleates assembly of the head domain of the 30S subunit. Is located at the subunit interface close to the decoding center, probably blocks exit of the E-site tRNA. This chain is Small ribosomal subunit protein uS7, found in Salinispora arenicola (strain CNS-205).